A 114-amino-acid chain; its full sequence is Small ribosomal subunit protein uS13m (114 aa).

The disordered stretch occupies residues 92 to 114; that stretch reads DGLPLRGQRSHTNARTSRKRIRK.

This sequence belongs to the universal ribosomal protein uS13 family. Part of the small ribosomal subunit.

The protein localises to the mitochondrion. In terms of biological role, located at the top of the head of the small subunit, it contacts several helices of the 18S rRNA. This is Small ribosomal subunit protein uS13m (RPS13) from Oenothera berteroana (Bertero's evening primrose).